Here is a 156-residue protein sequence, read N- to C-terminus: Ribonuclease pancreatic (156 aa).

Positions 1 to 28 (MALEKSLALLPLLVLVLLVLGWVQPSLG) are cleaved as a signal peptide. Over residues 33 to 43 (AKKFQRQHMDS) the composition is skewed to basic and acidic residues. Residues 33–52 (AKKFQRQHMDSDGSPSSNPT) are disordered. Substrate contacts are provided by Lys35 and Arg38. His40 acts as the Proton acceptor in catalysis. 4 disulfide bridges follow: Cys54/Cys112, Cys68/Cys123, Cys86/Cys138, and Cys93/Cys100. Asn62 carries an N-linked (GlcNAc...) asparagine glycan. 69 to 73 (KPVNT) is a binding site for substrate. The N-linked (GlcNAc...) asparagine glycan is linked to Asn90. Substrate contacts are provided by Lys94 and Arg113. A glycan (N-linked (GlcNAc...) asparagine) is linked at Asn116. The active-site Proton donor is the His147.

This sequence belongs to the pancreatic ribonuclease family. As to quaternary structure, monomer. Interacts with and forms tight 1:1 complexes with RNH1. Dimerization of two such complexes may occur. Interaction with RNH1 inhibits this protein.

The protein resides in the secreted. It carries out the reaction an [RNA] containing cytidine + H2O = an [RNA]-3'-cytidine-3'-phosphate + a 5'-hydroxy-ribonucleotide-3'-[RNA].. The enzyme catalyses an [RNA] containing uridine + H2O = an [RNA]-3'-uridine-3'-phosphate + a 5'-hydroxy-ribonucleotide-3'-[RNA].. Functionally, endonuclease that catalyzes the cleavage of RNA on the 3' side of pyrimidine nucleotides. Acts on single-stranded and double-stranded RNA. In Ateles geoffroyi (Black-handed spider monkey), this protein is Ribonuclease pancreatic (RNASE1).